The following is a 307-amino-acid chain: Atrochrysone carboxyl ACP thioesterase (307 aa).

Zn(2+) is bound by residues His-104, His-106, Asp-108, and His-109. Asp-108 (proton donor/acceptor) is an active-site residue.

The protein belongs to the metallo-beta-lactamase superfamily. Zn(2+) is required as a cofactor.

It carries out the reaction atrochrysone carboxyl-[ACP] + H2O = atrochrysone carboxylate + holo-[ACP] + H(+). Its pathway is secondary metabolite biosynthesis. Functionally, atrochrysone carboxyl ACP thioesterase; part of the gene cluster that mediates the biosynthesis of monodictyphenone, a prenyl xanthone derivative. The pathway begins with the synthesis of atrochrysone thioester by the polyketide synthase (PKS) mdpG. The atrochrysone carboxyl ACP thioesterase mdpF then breaks the thioester bond and releases the atrochrysone carboxylic acid from mdpG. The atrochrysone carboxylic acid is then converted to atrochrysone which is further transformed into emodin anthrone. The next step is performed by the anthrone oxygenase mdpH that catalyzes the oxidation of emodinanthrone to emodin. Emodin is further modified to yield monodictyphenone via several steps involving mdpB, mdpC mdpJ, mdpK and mdpL. The short chain dehydrogenase mdpC converts the tautomers of emodin hydroquinone into the 3-hydroxy-3,4-dihydroan-thracen-1(2H)-one derivative. These enzymes with xptA, xptB and xptC are also proposed to be involved in the synthesis of shamixanthone from emodin. Especially, direct reduction of emodin by the short chain dehydrogenase mdpC followed by dehydration catalyzed by the scytalone dehydratase-like protein mdpB gives loss of oxygen and formation of chrysophanol intermediate in two simple steps. The chain is Atrochrysone carboxyl ACP thioesterase from Emericella nidulans (strain FGSC A4 / ATCC 38163 / CBS 112.46 / NRRL 194 / M139) (Aspergillus nidulans).